Consider the following 394-residue polypeptide: Mannosyl-3-phosphoglycerate synthase (394 aa).

It belongs to the glycosyltransferase 2 family. It depends on Mg(2+) as a cofactor.

The protein localises to the cytoplasm. The enzyme catalyses (2R)-3-phosphoglycerate + GDP-alpha-D-mannose = 2-O-(alpha-D-mannosyl)-3-phosphoglycerate + GDP + H(+). It participates in carbohydrate biosynthesis; 2-(alpha-D-mannosyl)-D-glycerate biosynthesis; 2-(alpha-D-mannosyl)-D-glycerate from GDP-alpha-D-mannose (MPG route): step 1/2. Functionally, transfers a mannosyl group from GDP-mannose to phosphoglycerate to form mannosyl-3-phosphoglycerate (MPG). The enzyme is absolutely specific for GDP-mannose and 3-phosphoglycerate, and transfers the mannosyl group with retention of configuration. The protein is Mannosyl-3-phosphoglycerate synthase (mngA) of Pyrococcus horikoshii (strain ATCC 700860 / DSM 12428 / JCM 9974 / NBRC 100139 / OT-3).